We begin with the raw amino-acid sequence, 441 residues long: Ribulose bisphosphate carboxylase large chain (441 aa).

2 residues coordinate substrate: Asn89 and Thr139. The active-site Proton acceptor is Lys141. Lys143 is a substrate binding site. Mg(2+) is bound by residues Lys167, Asp169, and Glu170. Residue Lys167 is modified to N6-carboxylysine. His260 functions as the Proton acceptor in the catalytic mechanism. Residues Arg261, His293, and Ser345 each contribute to the substrate site.

This sequence belongs to the RuBisCO large chain family. Type I subfamily. In terms of assembly, heterohexadecamer of 8 large chains and 8 small chains; disulfide-linked. The disulfide link is formed within the large subunit homodimers. It depends on Mg(2+) as a cofactor. The disulfide bond which can form in the large chain dimeric partners within the hexadecamer appears to be associated with oxidative stress and protein turnover.

The protein resides in the plastid. It localises to the chloroplast. It carries out the reaction 2 (2R)-3-phosphoglycerate + 2 H(+) = D-ribulose 1,5-bisphosphate + CO2 + H2O. The enzyme catalyses D-ribulose 1,5-bisphosphate + O2 = 2-phosphoglycolate + (2R)-3-phosphoglycerate + 2 H(+). RuBisCO catalyzes two reactions: the carboxylation of D-ribulose 1,5-bisphosphate, the primary event in carbon dioxide fixation, as well as the oxidative fragmentation of the pentose substrate in the photorespiration process. Both reactions occur simultaneously and in competition at the same active site. The sequence is that of Ribulose bisphosphate carboxylase large chain from Coriandrum sativum (Coriander).